Here is a 273-residue protein sequence, read N- to C-terminus: 2-dehydro-3-deoxyphosphooctonate aldolase (273 aa).

It belongs to the KdsA family.

The protein resides in the cytoplasm. It catalyses the reaction D-arabinose 5-phosphate + phosphoenolpyruvate + H2O = 3-deoxy-alpha-D-manno-2-octulosonate-8-phosphate + phosphate. It functions in the pathway carbohydrate biosynthesis; 3-deoxy-D-manno-octulosonate biosynthesis; 3-deoxy-D-manno-octulosonate from D-ribulose 5-phosphate: step 2/3. The protein operates within bacterial outer membrane biogenesis; lipopolysaccharide biosynthesis. The protein is 2-dehydro-3-deoxyphosphooctonate aldolase of Desulfatibacillum aliphaticivorans.